A 204-amino-acid chain; its full sequence is MKNESTTIDVPAESSSAMKGKAPLIGVARDHTTSGSGGYNRGLSIFDFLLRLAAIVAALAAAATMGTSDETLPFFTQFLQFEASYDDLPTFQFFVIAMALVGGYLVLSLPISVVTILRPLATAPRLLLLVLDTAVLALNTAAASSAAAISYLAHSGNQNTNWLPICQQFGDFCQKSSGAVVSAFISVVFFTILVVISGVALKRH.

At 1–42 (MKNESTTIDVPAESSSAMKGKAPLIGVARDHTTSGSGGYNRG) the chain is on the cytoplasmic side. A helical transmembrane segment spans residues 43-63 (LSIFDFLLRLAAIVAALAAAA). The Extracellular segment spans residues 64–92 (TMGTSDETLPFFTQFLQFEASYDDLPTFQ). A helical transmembrane segment spans residues 93–113 (FFVIAMALVGGYLVLSLPISV). Over 114-125 (VTILRPLATAPR) the chain is Cytoplasmic. A helical transmembrane segment spans residues 126 to 146 (LLLLVLDTAVLALNTAAASSA). Over 147–178 (AAISYLAHSGNQNTNWLPICQQFGDFCQKSSG) the chain is Extracellular. A helical transmembrane segment spans residues 179-199 (AVVSAFISVVFFTILVVISGV). Residues 200 to 204 (ALKRH) lie on the Cytoplasmic side of the membrane.

Belongs to the Casparian strip membrane proteins (CASP) family. In terms of assembly, homodimer and heterodimers.

It is found in the cell membrane. Regulates membrane-cell wall junctions and localized cell wall deposition. Required for establishment of the Casparian strip membrane domain (CSD) and the subsequent formation of Casparian strips, a cell wall modification of the root endodermis that determines an apoplastic barrier between the intraorganismal apoplasm and the extraorganismal apoplasm and prevents lateral diffusion. The polypeptide is Casparian strip membrane protein 2 (Arabidopsis lyrata subsp. lyrata (Lyre-leaved rock-cress)).